A 97-amino-acid chain; its full sequence is Putative mitochondrial import inner membrane translocase subunit Tim8 A-B (97 aa).

Positions 43–66 match the Twin CX3C motif motif; that stretch reads CWEKCMDKPGPRLDGRAELCLVNC. 2 cysteine pairs are disulfide-bonded: C43–C66 and C47–C62.

Belongs to the small Tim family. In terms of assembly, heterohexamer; possibly composed of 3 copies of TIMM8AB and 3 copies of TIMM13.

It localises to the mitochondrion inner membrane. In terms of biological role, putative mitochondrial intermembrane chaperone that participates in the import and insertion of some multi-pass transmembrane proteins into the mitochondrial inner membrane. Also required for the transfer of beta-barrel precursors from the TOM complex to the sorting and assembly machinery (SAM complex) of the outer membrane. Acts as a chaperone-like protein that protects the hydrophobic precursors from aggregation and guide them through the mitochondrial intermembrane space. This chain is Putative mitochondrial import inner membrane translocase subunit Tim8 A-B (Timm8a2), found in Mus musculus (Mouse).